We begin with the raw amino-acid sequence, 190 residues long: Lipid A acyltransferase PagP (190 aa).

Positions 1–18 (MKRLISCLTIICALNASA) are cleaved as a signal peptide. Active-site residues include H60, D103, and S104.

The protein belongs to the lipid A palmitoyltransferase family. Homodimer.

It is found in the cell outer membrane. The enzyme catalyses a lipid A + a 1,2-diacyl-sn-glycero-3-phosphocholine = a hepta-acyl lipid A + a 2-acyl-sn-glycero-3-phosphocholine. It catalyses the reaction a lipid IVA + a 1,2-diacyl-sn-glycero-3-phosphocholine = a lipid IVB + a 2-acyl-sn-glycero-3-phosphocholine. The catalysed reaction is a lipid IIA + a 1,2-diacyl-sn-glycero-3-phosphocholine = a lipid IIB + a 2-acyl-sn-glycero-3-phosphocholine. Its function is as follows. Transfers a fatty acid residue from the sn-1 position of a phospholipid to the N-linked hydroxyfatty acid chain on the proximal unit of lipid A or its precursors. The protein is Lipid A acyltransferase PagP of Legionella pneumophila subsp. pneumophila (strain Philadelphia 1 / ATCC 33152 / DSM 7513).